We begin with the raw amino-acid sequence, 147 residues long: Protein phosphatase 1 regulatory subunit 14A (147 aa).

Residues 1–11 (MAAQRLGKRVL) show a composition bias toward basic residues. A disordered region spans residues 1–37 (MAAQRLGKRVLSKLQSPSRARGPGGSPGGLQKRHARV). The residue at position 26 (S26) is a Phosphoserine. An inhibitory region spans residues 35 to 120 (ARVTVKYDRR…LLAKLQGLHR (86 aa)). T38 is modified (phosphothreonine; by PKC). The segment at 118–147 (LHRQPGLRQPSPSHDGSLSPLQDRARTAHP) is disordered. The segment covering 127-137 (PSPSHDGSLSP) has biased composition (polar residues). S128, S134, and S136 each carry phosphoserine.

It belongs to the PP1 inhibitor family. In terms of tissue distribution, isoform 1 is detected in aorta and testis. Isoform 2 is detected in aorta.

It is found in the cytoplasm. In terms of biological role, inhibitor of PPP1CA. Has over 1000-fold higher inhibitory activity when phosphorylated, creating a molecular switch for regulating the phosphorylation status of PPP1CA substrates and smooth muscle contraction. This Homo sapiens (Human) protein is Protein phosphatase 1 regulatory subunit 14A (PPP1R14A).